The chain runs to 519 residues: Glucoamylase GLA1 (519 aa).

The signal sequence occupies residues 1–27; sequence MRFGVLISVFVAIVSALPLQEGPLNKR. Residues asparagine 115 and asparagine 127 are each glycosylated (N-linked (GlcNAc...) asparagine). Tryptophan 166 contributes to the substrate binding site. An N-linked (GlcNAc...) asparagine glycan is attached at asparagine 205. Aspartate 234 acts as the Proton acceptor in catalysis. Glutamate 237 (proton donor) is an active-site residue.

Belongs to the glycosyl hydrolase 15 family.

It catalyses the reaction Hydrolysis of terminal (1-&gt;4)-linked alpha-D-glucose residues successively from non-reducing ends of the chains with release of beta-D-glucose.. The chain is Glucoamylase GLA1 (GLA1) from Saccharomycopsis fibuligera (Yeast).